The following is a 430-amino-acid chain: Tol-Pal system protein TolB (430 aa).

An N-terminal signal peptide occupies residues 1–21 (MKQAFRLMVGLLVLWASVLHA).

The protein belongs to the TolB family. As to quaternary structure, the Tol-Pal system is composed of five core proteins: the inner membrane proteins TolA, TolQ and TolR, the periplasmic protein TolB and the outer membrane protein Pal. They form a network linking the inner and outer membranes and the peptidoglycan layer.

It is found in the periplasm. In terms of biological role, part of the Tol-Pal system, which plays a role in outer membrane invagination during cell division and is important for maintaining outer membrane integrity. TolB occupies a key intermediary position in the Tol-Pal system because it communicates directly with both membrane-embedded components, Pal in the outer membrane and TolA in the inner membrane. This is Tol-Pal system protein TolB from Edwardsiella ictaluri (strain 93-146).